The chain runs to 404 residues: tRNA pseudouridine synthase D (404 aa).

Residue Asp-79 is the Nucleophile of the active site. A TRUD domain is found at 154–364 (GVPNRFGEQR…MEGERRPLRV (211 aa)).

This sequence belongs to the pseudouridine synthase TruD family.

The enzyme catalyses uridine(13) in tRNA = pseudouridine(13) in tRNA. Functionally, responsible for synthesis of pseudouridine from uracil-13 in transfer RNAs. The protein is tRNA pseudouridine synthase D of Geobacter metallireducens (strain ATCC 53774 / DSM 7210 / GS-15).